The primary structure comprises 400 residues: MKFSQSLIALAACFLPLIAAAPVEAQHAKIRSPRAQDIIPDSYIVVFNKGVNDADIESEFSSVSRILSKRRSAHKGVGHKYNITGFKGYQIETDTGSIGEIAASPLVAWIEMDGKVQANALETRSGATWGLGRISHKATGSNSYIYDGSAGSGSTVYVLDTGIYIEHSEFEGRAKWGANYISGSPDTDENGHGTHCAGTIAGATYGVASKANLVAVKVLDRDGFGATSATIAGINFVGQNGKDGKSVISMSLRGHYSAAVNSAVESTVSNGVTIVVAAGNDGDDASNYSPASAKNAITVGSVDSTDTRASSSNYGSVVDIFAPGVNVKSASIGGKSAFSIKSGTSMATPHVAGLAAYLIGLGGLSSPAAIASKIASIGTKGSVKDPKGSVNLIAYNGNGA.

Positions 1–20 are cleaved as a signal peptide; the sequence is MKFSQSLIALAACFLPLIAA. The propeptide occupies 21–119; sequence APVEAQHAKI…IEMDGKVQAN (99 aa). The region spanning 42–117 is the Inhibitor I9 domain; it reads SYIVVFNKGV…AWIEMDGKVQ (76 aa). Residue Asn-82 is glycosylated (N-linked (GlcNAc...) asparagine). The region spanning 128–400 is the Peptidase S8 domain; sequence TWGLGRISHK…NLIAYNGNGA (273 aa). Active-site charge relay system residues include Asp-160, His-192, and Ser-345.

Belongs to the peptidase S8 family.

It is found in the secreted. In terms of biological role, major secreted subtilisin-like serine endopeptidase. Mediates the degradation of collagen, the major structural protein in the mammalian host. Degrades the nonhelical regions of collagen that function in the cross-linking of the helical components. May function as virulence factor involved in epidermal wing necrosis observed in white nose syndrome (WNS) in bats. The protein is Subtilisin-like protease 1 of Pseudogymnoascus destructans (strain ATCC MYA-4855 / 20631-21) (Bat white-nose syndrome fungus).